We begin with the raw amino-acid sequence, 475 residues long: Lipid II flippase MurJ (475 aa).

Over 1-2 the chain is Cytoplasmic; sequence MS. A helical transmembrane segment spans residues 3-23; that stretch reads ILFSSILFSIATFFSRILGLF. Residues 24–35 lie on the Periplasmic side of the membrane; it reads RDVLFAKYFGVS. Residues 36-56 traverse the membrane as a helical segment; sequence YELDAYFIAIMFPFFLRKVFG. Topologically, residues 57-78 are cytoplasmic; sequence EGAMSSAFVPLYSEKSGEEKDK. Residues 79–99 form a helical membrane-spanning segment; that stretch reads FLSSVINGFSLIILALVILSY. At 100 to 123 the chain is on the periplasmic side; that stretch reads FFPELIINLFGAGSSHETKILAKK. The chain crosses the membrane as a helical span at residues 124–144; sequence LLLITSPSIYFIFLWAISYSI. The Cytoplasmic portion of the chain corresponds to 145-150; it reads LNTNNK. The helical transmembrane segment at 151-171 threads the bilayer; the sequence is FFWPALTPSISNITIIIGTFL. Residues 172 to 175 lie on the Periplasmic side of the membrane; the sequence is STKY. The chain crosses the membrane as a helical span at residues 176–196; it reads GIISPTIGFLIGSILMFFSII. Residues 197-213 are Cytoplasmic-facing; it reads KSIIKHKYYFTIKHFPH. A helical transmembrane segment spans residues 214–238; the sequence is FLKLFFPTFMTMVVSQINTVVDMNV. The Periplasmic portion of the chain corresponds to 239–249; the sequence is VSFYDKGSISY. A helical membrane pass occupies residues 250–271; that stretch reads LQYASRFYLLPYGLFAVSVSTV. Residues 272 to 287 lie on the Cytoplasmic side of the membrane; sequence VLSKISNDRKNFNYHL. The helical transmembrane segment at 288-308 threads the bilayer; the sequence is NDALKTTLFFTIPSMVGLIFL. Residues 309-332 are Periplasmic-facing; sequence STPIIRFFYEHGAFTSKDTLITSK. A helical transmembrane segment spans residues 333–353; sequence ILIAYTLGLPFYGIYSTISRS. Topologically, residues 354–362 are cytoplasmic; sequence YHAIKNTKT. A helical transmembrane segment spans residues 363–383; sequence PFIAATIVSLSNIILDIIFGL. At 384–386 the chain is on the periplasmic side; sequence KYG. A helical membrane pass occupies residues 387–407; that stretch reads PIGVALATSIAGIIGVLYLLF. The Cytoplasmic segment spans residues 408–416; sequence SVKTFPIKD. The chain crosses the membrane as a helical span at residues 417 to 437; sequence FLKISLNSLIMLFVIYLTDFT. Topologically, residues 438 to 440 are periplasmic; that stretch reads DNE. Residues 441–461 traverse the membrane as a helical segment; it reads FWFLIQILIGILVYLIFSSIF. Topologically, residues 462-475 are cytoplasmic; sequence YRDLIRRFLYARKK.

The protein belongs to the MurJ/MviN family.

The protein resides in the cell inner membrane. It participates in cell wall biogenesis; peptidoglycan biosynthesis. Involved in peptidoglycan biosynthesis. Transports lipid-linked peptidoglycan precursors from the inner to the outer leaflet of the cytoplasmic membrane. The sequence is that of Lipid II flippase MurJ from Thermosipho africanus (strain TCF52B).